The primary structure comprises 668 residues: Phosphoglycerate transport system sensor protein PgtB (668 aa).

2 helical membrane-spanning segments follow: residues 20-40 (GAFL…LYSW) and 342-362 (LILV…HYFI). The 53-residue stretch at 364 to 416 (SRLVKRFTALNQAVVQIGLGRTDSTIPVYGRDELGRIARLLRHTLGQLNMQRR) folds into the HAMP domain. The 210-residue stretch at 454–663 (TLAHEINQPL…CVVLQFSVTD (210 aa)) folds into the Histidine kinase domain. His457 carries the post-translational modification Phosphohistidine; by autocatalysis.

The protein resides in the cell inner membrane. It carries out the reaction ATP + protein L-histidine = ADP + protein N-phospho-L-histidine.. In terms of biological role, member of the two-component regulatory system PgtB/PgtA that regulates the inducible phosphoglycerate transport system. Activates PgtA by phosphorylation. The chain is Phosphoglycerate transport system sensor protein PgtB (pgtB) from Salmonella typhimurium (strain LT2 / SGSC1412 / ATCC 700720).